Here is a 1481-residue protein sequence, read N- to C-terminus: Cystic fibrosis transmembrane conductance regulator (1481 aa).

Residues 1–77 lie on the Cytoplasmic side of the membrane; that stretch reads MQKSPLEKAG…KLINALRRCF (77 aa). A helical transmembrane segment spans residues 78-98; that stretch reads FWRFMFYGILLYLGEVTKAVQ. In terms of domain architecture, ABC transmembrane type-1 1 spans 81–365; it reads FMFYGILLYL…WAVQTWYDSL (285 aa). Over 99 to 122 the chain is Extracellular; it reads PLLLGRIIASYDPDNKVERSIAIY. The helical transmembrane segment at 123-146 threads the bilayer; the sequence is LGIGLCLLFVVRTLLLHPAIFGLH. Residues 147–195 are Cytoplasmic-facing; it reads HIGMQMRIAMFSLIYKKTLKLSSRVLDKISIGQLISLLSNNLNKFDEGL. The helical transmembrane segment at 196–216 threads the bilayer; the sequence is ALAHFVWISPLQVTLLMGLLW. Topologically, residues 217-222 are extracellular; it reads ELLQAS. The helical transmembrane segment at 223–243 threads the bilayer; the sequence is AFCGLAFLIVLALVQAGLGRM. Residues 244 to 298 are Cytoplasmic-facing; that stretch reads MMKYRDQRAGKINERLVITSEMIENIQSVKAYCWEEAMEKMIENLRQTELKLTRK. Residues 299 to 319 form a helical membrane-spanning segment; the sequence is AAYVRYFNSSAFFFSGFFVVF. The Extracellular segment spans residues 320–339; that stretch reads LSVLPYALTKGIILRKIFTT. The helical transmembrane segment at 340-358 threads the bilayer; it reads ISFCIVLRMAVTRQFPWAV. At 359–858 the chain is on the cytoplasmic side; that stretch reads QTWYDSLGAI…YLRYITVHRS (500 aa). Residues Trp-401, Ser-434, 458-465, and Gln-493 each bind ATP; that span reads GSTGAGKT. Positions 423 to 646 constitute an ABC transporter 1 domain; that stretch reads NGDNNLFFSN…RPDFSSKLMG (224 aa). A lipid anchor (S-palmitoyl cysteine) is attached at Cys-524. Residues Ser-549 and Ser-660 each carry the phosphoserine modification. The interval 654-831 is disordered R region; it reads SAERRNSILT…EEINEEDLKE (178 aa). At Ser-670 the chain carries Phosphoserine; by PKA. A Phosphoserine modification is found at Ser-686. A Glycyl lysine isopeptide (Lys-Gly) (interchain with G-Cter in ubiquitin) cross-link involves residue Lys-688. A phosphoserine mark is found at Ser-700 and Ser-712. Thr-717 is subject to Phosphothreonine. A phosphoserine mark is found at Ser-737, Ser-768, Ser-790, Ser-795, and Ser-813. A helical transmembrane segment spans residues 859–879; that stretch reads LIFVLIWCIVIFLAEVAASLV. Positions 859–1155 constitute an ABC transmembrane type-1 2 domain; sequence LIFVLIWCIV…AVNSSIDVDS (297 aa). Over 880 to 918 the chain is Extracellular; it reads VLWLFGNTAPQDKENSTKSGNSSYAVIITNTSSYYFFYI. N-linked (GlcNAc...) asparagine glycosylation is found at Asn-894, Asn-900, and Asn-909. The discontinuously helical transmembrane segment at 919–939 threads the bilayer; sequence YVGVADTLLALGLFRGLPLVH. Over 940 to 990 the chain is Cytoplasmic; the sequence is TLITVSKILHHKMLHSVLQAPMSTLNTLKAGGILNRFSKDIAILDDLLPLT. The chain crosses the membrane as a helical span at residues 991-1011; sequence IFDFIQLLLIVVGAIAVVSVL. Residues 1012 to 1013 are Extracellular-facing; it reads QP. The helical transmembrane segment at 1014–1034 threads the bilayer; it reads YIFLATVPVIAAFILLRAYFL. Topologically, residues 1035–1095 are cytoplasmic; the sequence is HTSQQLKQLE…TANWFLYLST (61 aa). Residues 1096–1116 form a helical membrane-spanning segment; sequence LRWFQMRIEMIFVLFFIAVAF. At 1117–1130 the chain is on the extracellular side; it reads ISILTTGEGEGRVG. Residues 1131-1151 traverse the membrane as a helical segment; it reads IILTLAMNIMSTLQWAVNSSI. The Cytoplasmic portion of the chain corresponds to 1152–1481; that stretch reads DVDSLMRSVS…AEEEVQGTRL (330 aa). In terms of domain architecture, ABC transporter 2 spans 1199-1444; it reads VKKDDVWPSG…KSLFRQAISS (246 aa). ATP-binding positions include Tyr-1220 and 1245–1252; that span reads GRTGSGKS. The interval 1387-1481 is interaction with GORASP2; sequence RTLKQAFADC…AEEEVQGTRL (95 aa). The S-palmitoyl cysteine moiety is linked to residue Cys-1396. Phosphoserine is present on residues Ser-1445 and Ser-1457. Residues 1449–1481 are disordered; the sequence is KLFPHRNSSKHKSRPQITALKEEAEEEVQGTRL. Over residues 1450–1462 the composition is skewed to basic residues; it reads LFPHRNSSKHKSR. Residues 1471-1481 are compositionally biased toward acidic residues; sequence EAEEEVQGTRL. Residues 1479–1481 carry the PDZ-binding motif; the sequence is TRL.

This sequence belongs to the ABC transporter superfamily. ABCC family. CFTR transporter (TC 3.A.1.202) subfamily. As to quaternary structure, monomer; does not require oligomerization for channel activity. May form oligomers in the membrane. Interacts with SLC26A3, SLC26A6 and NHERF1. Interacts with SHANK2. Interacts with MYO6. Interacts (via C-terminus) with GOPC (via PDZ domain); this promotes CFTR internalization and thereby decreases channel activity. Interacts with SLC4A7 through NHERF1. Found in a complex with MYO5B and RAB11A. Interacts with ANO1. Interacts with SLC26A8. Interacts with AHCYL1; the interaction increases CFTR activity. Interacts with CSE1L. The core-glycosylated form interacts with GORASP2 (via PDZ GRASP-type 1 domain) in respone to ER stress. Interacts with MARCHF2; the interaction leads to CFTR ubiqtuitination and degradation. Interacts with ADGRG2. In terms of processing, N-glycosylated. Phosphorylated; cAMP treatment promotes phosphorylation and activates the channel. Dephosphorylation decreases the ATPase activity (in vitro). Phosphorylation at PKA sites activates the channel. Phosphorylation at PKC sites enhances the response to phosphorylation by PKA. Phosphorylated by AMPK; this inhibits channel activity. Post-translationally, ubiquitinated, leading to its degradation in the lysosome. Deubiquitination by USP10 in early endosomes enhances its endocytic recycling to the cell membrane. Ubiquitinated by RNF185 during ER stress. Ubiquitinated by MARCHF2. Isoform 1 is expressed in the pancreas. Isoform 2 is specifically expressed in the ventricle.

It is found in the apical cell membrane. It localises to the early endosome membrane. Its subcellular location is the cell membrane. The protein resides in the recycling endosome membrane. The protein localises to the endoplasmic reticulum membrane. It is found in the nucleus. It carries out the reaction ATP + H2O + closed Cl(-) channel = ADP + phosphate + open Cl(-) channel.. It catalyses the reaction chloride(in) = chloride(out). The catalysed reaction is hydrogencarbonate(in) = hydrogencarbonate(out). The enzyme catalyses ATP + H2O = ADP + phosphate + H(+). Functionally, epithelial ion channel that plays an important role in the regulation of epithelial ion and water transport and fluid homeostasis. Mediates the transport of chloride ions across the cell membrane. Possesses an intrinsic ATPase activity and utilizes ATP to gate its channel; the passive flow of anions through the channel is gated by cycles of ATP binding and hydrolysis by the ATP-binding domains. The ion channel is also permeable to HCO(3)(-); selectivity depends on the extracellular chloride concentration. Exerts its function also by modulating the activity of other ion channels and transporters. Contributes to the regulation of the pH and the ion content of the epithelial fluid layer. Modulates the activity of the epithelial sodium channel (ENaC) complex, in part by regulating the cell surface expression of the ENaC complex. May regulate bicarbonate secretion and salvage in epithelial cells by regulating the transporter SLC4A7. Can inhibit the chloride channel activity of ANO1. Plays a role in the chloride and bicarbonate homeostasis during sperm epididymal maturation and capacitation. The sequence is that of Cystic fibrosis transmembrane conductance regulator from Oryctolagus cuniculus (Rabbit).